A 128-amino-acid polypeptide reads, in one-letter code: Small ribosomal subunit protein bS6 (128 aa).

The protein belongs to the bacterial ribosomal protein bS6 family.

In terms of biological role, binds together with bS18 to 16S ribosomal RNA. This Thermotoga sp. (strain RQ2) protein is Small ribosomal subunit protein bS6.